Here is a 1219-residue protein sequence, read N- to C-terminus: DNA ligase 4 (1219 aa).

Residues E251, K253, R258, R273, E303, F342, E418, K423, R434, K440, and K442 each contribute to the ATP site. K253 (N6-AMP-lysine intermediate) is an active-site residue. E303 provides a ligand contact to Mg(2+). E418 is a Mg(2+) binding site. Positions 604–632 are disordered; it reads NGTTQKQKESESTQDNPKVNKSSKRGEKK. 2 BRCT domains span residues 651 to 739 and 807 to 909; these read GKTS…PKYF and VYFY…VYTL. Disordered stretches follow at residues 914-1126 and 1146-1197; these read MEES…MDMK and IPSQ…SDVV. Residues 932–960 show a composition bias toward polar residues; sequence VASQGSAQTKEPASSKIAITSSRGRSNTR. Residues 1042-1051 are compositionally biased toward basic residues; it reads QRSRRGKKAA. Positions 1056–1065 are enriched in acidic residues; the sequence is DESDENDELD. 2 stretches are compositionally biased toward basic and acidic residues: residues 1084 to 1096 and 1117 to 1126; these read VENE…DIAK and RNAKTEMDMK. Polar residues predominate over residues 1148–1159; that stretch reads SQKTTETSNRTT.

Belongs to the ATP-dependent DNA ligase family. In terms of assembly, interacts with XRCC4 via its tandem BRCT domains. Interacts with POLL. It depends on Mg(2+) as a cofactor. In terms of tissue distribution, widely expressed, with higher levels in young flowers and roots.

It localises to the nucleus. The enzyme catalyses ATP + (deoxyribonucleotide)n-3'-hydroxyl + 5'-phospho-(deoxyribonucleotide)m = (deoxyribonucleotide)n+m + AMP + diphosphate.. Its function is as follows. DNA ligase involved in DNA non-homologous end joining (NHEJ); required for double-strand break (DSB) repair. May be involved for T-DNA integration even if not absolutely required. Seems to be dispensable under normal growth conditions. In Arabidopsis thaliana (Mouse-ear cress), this protein is DNA ligase 4 (LIG4).